A 50-amino-acid polypeptide reads, in one-letter code: METTNFGFIISLLFVGIPTIFLVGLYISTSDGEKSSFFSDSSKGKLGPKS.

A helical transmembrane segment spans residues 7–27 (GFIISLLFVGIPTIFLVGLYI). The segment at 31–50 (DGEKSSFFSDSSKGKLGPKS) is disordered.

It belongs to the PsbM family. As to quaternary structure, PSII is composed of 1 copy each of membrane proteins PsbA, PsbB, PsbC, PsbD, PsbE, PsbF, PsbH, PsbI, PsbJ, PsbK, PsbL, PsbM, PsbT, PsbX, PsbY, Psb30/Ycf12, peripheral proteins PsbO, CyanoQ (PsbQ), PsbU, PsbV and a large number of cofactors. It forms dimeric complexes.

The protein localises to the cellular thylakoid membrane. Its function is as follows. One of the components of the core complex of photosystem II (PSII). PSII is a light-driven water:plastoquinone oxidoreductase that uses light energy to abstract electrons from H(2)O, generating O(2) and a proton gradient subsequently used for ATP formation. It consists of a core antenna complex that captures photons, and an electron transfer chain that converts photonic excitation into a charge separation. This subunit is found at the monomer-monomer interface. The protein is Photosystem II reaction center protein M of Prochlorococcus marinus (strain SARG / CCMP1375 / SS120).